Reading from the N-terminus, the 183-residue chain is Negative modulator of initiation of replication (183 aa).

An interaction with DNA region spans residues 90 to 91 (AV).

Belongs to the SeqA family. Homodimer. Polymerizes to form helical filaments.

The protein resides in the cytoplasm. Functionally, negative regulator of replication initiation, which contributes to regulation of DNA replication and ensures that replication initiation occurs exactly once per chromosome per cell cycle. Binds to pairs of hemimethylated GATC sequences in the oriC region, thus preventing assembly of replication proteins and re-initiation at newly replicated origins. Repression is relieved when the region becomes fully methylated. The chain is Negative modulator of initiation of replication from Shewanella oneidensis (strain ATCC 700550 / JCM 31522 / CIP 106686 / LMG 19005 / NCIMB 14063 / MR-1).